The following is a 326-amino-acid chain: Malate dehydrogenase (326 aa).

12 to 18 (GAAGQIA) lines the NAD(+) pocket. Arginine 93 and arginine 99 together coordinate substrate. Residues asparagine 106, glutamine 113, and 130 to 132 (VGN) each bind NAD(+). Positions 132 and 163 each coordinate substrate. Histidine 188 (proton acceptor) is an active-site residue.

Belongs to the LDH/MDH superfamily. MDH type 2 family.

It carries out the reaction (S)-malate + NAD(+) = oxaloacetate + NADH + H(+). Its function is as follows. Catalyzes the reversible oxidation of malate to oxaloacetate. This chain is Malate dehydrogenase, found in Corynebacterium diphtheriae (strain ATCC 700971 / NCTC 13129 / Biotype gravis).